The sequence spans 718 residues: Polyribonucleotide nucleotidyltransferase (718 aa).

Positions 497 and 503 each coordinate Mg(2+). The KH domain maps to 564-623 (PRLLTMRIDPDMIGLVIGPGGKTVKSITEQTKTKIDIDDDGTVTISASEAEQAERAKQLI). Residues 633 to 701 (GEVYVGRVTR…NKGRLNLTRL (69 aa)) enclose the S1 motif domain.

It belongs to the polyribonucleotide nucleotidyltransferase family. Mg(2+) serves as cofactor.

It is found in the cytoplasm. It carries out the reaction RNA(n+1) + phosphate = RNA(n) + a ribonucleoside 5'-diphosphate. Its function is as follows. Involved in mRNA degradation. Catalyzes the phosphorolysis of single-stranded polyribonucleotides processively in the 3'- to 5'-direction. This chain is Polyribonucleotide nucleotidyltransferase, found in Gloeothece citriformis (strain PCC 7424) (Cyanothece sp. (strain PCC 7424)).